The chain runs to 152 residues: 2-C-methyl-D-erythritol 2,4-cyclodiphosphate synthase (152 aa).

A divalent metal cation contacts are provided by Asp8 and His10. Residues 8–10 and 34–35 contribute to the 4-CDP-2-C-methyl-D-erythritol 2-phosphate site; these read DSH and HS. Residue His42 coordinates a divalent metal cation. 4-CDP-2-C-methyl-D-erythritol 2-phosphate contacts are provided by residues 56-58, 61-65, 100-106, and 131-135; these read DIG, FPDTD, LDRPKLG, and FKTSE.

This sequence belongs to the IspF family. In terms of assembly, homotrimer. A divalent metal cation is required as a cofactor.

It carries out the reaction 4-CDP-2-C-methyl-D-erythritol 2-phosphate = 2-C-methyl-D-erythritol 2,4-cyclic diphosphate + CMP. The protein operates within isoprenoid biosynthesis; isopentenyl diphosphate biosynthesis via DXP pathway; isopentenyl diphosphate from 1-deoxy-D-xylulose 5-phosphate: step 4/6. Functionally, involved in the biosynthesis of isopentenyl diphosphate (IPP) and dimethylallyl diphosphate (DMAPP), two major building blocks of isoprenoid compounds. Catalyzes the conversion of 4-diphosphocytidyl-2-C-methyl-D-erythritol 2-phosphate (CDP-ME2P) to 2-C-methyl-D-erythritol 2,4-cyclodiphosphate (ME-CPP) with a corresponding release of cytidine 5-monophosphate (CMP). This is 2-C-methyl-D-erythritol 2,4-cyclodiphosphate synthase from Thermus thermophilus (strain ATCC 27634 / DSM 579 / HB8).